A 265-amino-acid polypeptide reads, in one-letter code: Hydroxyethylthiazole kinase (265 aa).

Residue methionine 43 coordinates substrate. ATP contacts are provided by lysine 118 and threonine 165. Residue glycine 192 participates in substrate binding.

Belongs to the Thz kinase family. Requires Mg(2+) as cofactor.

The enzyme catalyses 5-(2-hydroxyethyl)-4-methylthiazole + ATP = 4-methyl-5-(2-phosphooxyethyl)-thiazole + ADP + H(+). The protein operates within cofactor biosynthesis; thiamine diphosphate biosynthesis; 4-methyl-5-(2-phosphoethyl)-thiazole from 5-(2-hydroxyethyl)-4-methylthiazole: step 1/1. Functionally, catalyzes the phosphorylation of the hydroxyl group of 4-methyl-5-beta-hydroxyethylthiazole (THZ). The polypeptide is Hydroxyethylthiazole kinase (Pyrococcus furiosus (strain ATCC 43587 / DSM 3638 / JCM 8422 / Vc1)).